The following is a 141-amino-acid chain: Nucleoside diphosphate kinase (141 aa).

ATP is bound by residues lysine 11, tyrosine 59, arginine 87, threonine 93, arginine 104, and asparagine 114. Residue histidine 117 is the Pros-phosphohistidine intermediate of the active site.

It belongs to the NDK family. In terms of assembly, homotetramer. Requires Mg(2+) as cofactor.

It localises to the cytoplasm. The enzyme catalyses a 2'-deoxyribonucleoside 5'-diphosphate + ATP = a 2'-deoxyribonucleoside 5'-triphosphate + ADP. The catalysed reaction is a ribonucleoside 5'-diphosphate + ATP = a ribonucleoside 5'-triphosphate + ADP. Its function is as follows. Major role in the synthesis of nucleoside triphosphates other than ATP. The ATP gamma phosphate is transferred to the NDP beta phosphate via a ping-pong mechanism, using a phosphorylated active-site intermediate. The chain is Nucleoside diphosphate kinase from Orientia tsutsugamushi (strain Boryong) (Rickettsia tsutsugamushi).